A 379-amino-acid chain; its full sequence is Omega-3 fatty acid desaturase, endoplasmic reticulum (379 aa).

The chain crosses the membrane as a helical span at residues 52–72 (LSYVVRDVIFVATLIGIAIHL). The Histidine box-1 signature appears at 97 to 101 (HDCGH). The short motif at 133–137 (HKTHH) is the Histidine box-2 element. 2 consecutive transmembrane segments (helical) span residues 213-233 (TLCW…FGSL) and 236-256 (FKIY…VTYL). The Histidine box-3 motif lies at 300–304 (HVIHH).

Belongs to the fatty acid desaturase type 1 family.

It localises to the endoplasmic reticulum membrane. It functions in the pathway lipid metabolism; polyunsaturated fatty acid biosynthesis. Functionally, ER (microsomal) omega-3 fatty acid desaturase introduces the third double bond in the biosynthesis of 18:3 fatty acids, important constituents of plant membranes. It is thought to use cytochrome b5 as an electron donor and to act on fatty acids esterified to phosphatidylcholine and, possibly, other phospholipids. In Nicotiana tabacum (Common tobacco), this protein is Omega-3 fatty acid desaturase, endoplasmic reticulum (FAD3).